The chain runs to 553 residues: Arginine--tRNA ligase (553 aa).

Residues 130–140 carry the 'HIGH' region motif; it reads ANPTGDLHIGH.

The protein belongs to the class-I aminoacyl-tRNA synthetase family. As to quaternary structure, monomer.

It localises to the cytoplasm. The catalysed reaction is tRNA(Arg) + L-arginine + ATP = L-arginyl-tRNA(Arg) + AMP + diphosphate. The chain is Arginine--tRNA ligase from Staphylococcus aureus (strain MSSA476).